A 199-amino-acid chain; its full sequence is Recombination protein RecR (199 aa).

The segment at 58-73 adopts a C4-type zinc-finger fold; the sequence is CSVCYNLSETELCRIC. A Toprim domain is found at 81–176; the sequence is TRLCVVEQPR…EITRLARGIT (96 aa).

This sequence belongs to the RecR family.

May play a role in DNA repair. It seems to be involved in an RecBC-independent recombinational process of DNA repair. It may act with RecF and RecO. The protein is Recombination protein RecR of Rhodopirellula baltica (strain DSM 10527 / NCIMB 13988 / SH1).